The sequence spans 355 residues: Probable nitronate monooxygenase (355 aa).

FMN is bound by residues N71, Q175, G180, G218, and 237 to 240; that span reads QMGT.

It belongs to the nitronate monooxygenase family. NMO class I subfamily. FMN is required as a cofactor.

It carries out the reaction 3 propionate 3-nitronate + 3 O2 + H2O = 3 3-oxopropanoate + 2 nitrate + nitrite + H2O2 + 3 H(+). In terms of biological role, nitronate monooxygenase that uses molecular oxygen to catalyze the oxidative denitrification of alkyl nitronates. Acts on propionate 3-nitronate (P3N), the presumed physiological substrate. Probably functions in the detoxification of P3N, a metabolic poison produced by plants and fungi as a defense mechanism. The protein is Probable nitronate monooxygenase of Staphylococcus aureus (strain MRSA252).